A 322-amino-acid chain; its full sequence is uncharacterized protein (322 aa).

Over residues 1 to 13 (MTNADEQNMGQQE) the composition is skewed to polar residues. 2 disordered regions span residues 1–94 (MTNA…EEYE) and 125–322 (RREM…TDEE). Residues 14–31 (GTDTATTAQDTNTQTVGT) are compositionally biased toward low complexity. A compositionally biased stretch (polar residues) spans 32–50 (QSENTQNTQQASDAQTEQT). Positions 64-75 (EVDEDDVLDAQE) are enriched in acidic residues. Composition is skewed to basic and acidic residues over residues 141–227 (GGDR…RGGD), 235–269 (RPREDRGGFGDRDRGGFRPREDRGERNFGGDRGGD), 277–295 (RPREDRNFGDREFRPRTDD), and 308–322 (ARADRGWANRRTDEE).

This is an uncharacterized protein from Deinococcus radiodurans (strain ATCC 13939 / DSM 20539 / JCM 16871 / CCUG 27074 / LMG 4051 / NBRC 15346 / NCIMB 9279 / VKM B-1422 / R1).